Consider the following 314-residue polypeptide: 2,3-dihydroxyphenylpropionate/2,3-dihydroxicinnamic acid 1,2-dioxygenase (314 aa).

The active-site Proton donor is His115. His179 acts as the Proton acceptor in catalysis.

This sequence belongs to the LigB/MhpB extradiol dioxygenase family. Homotetramer. Fe(2+) serves as cofactor.

It catalyses the reaction 3-(2,3-dihydroxyphenyl)propanoate + O2 = (2Z,4E)-2-hydroxy-6-oxonona-2,4-dienedioate + H(+). It carries out the reaction (2E)-3-(2,3-dihydroxyphenyl)prop-2-enoate + O2 = (2Z,4E,7E)-2-hydroxy-6-oxonona-2,4,7-trienedioate + H(+). Its pathway is aromatic compound metabolism; 3-phenylpropanoate degradation. Catalyzes the non-heme iron(II)-dependent oxidative cleavage of 2,3-dihydroxyphenylpropionic acid and 2,3-dihydroxicinnamic acid into 2-hydroxy-6-ketononadienedioate and 2-hydroxy-6-ketononatrienedioate, respectively. In Klebsiella pneumoniae subsp. pneumoniae (strain ATCC 700721 / MGH 78578), this protein is 2,3-dihydroxyphenylpropionate/2,3-dihydroxicinnamic acid 1,2-dioxygenase.